A 274-amino-acid polypeptide reads, in one-letter code: Secreted RxLR effector protein 144 (274 aa).

A signal peptide spans 1 to 20 (MRPWLLLLVGLSSFFALSTS). The RxLR-dEER motif lies at 49-72 (RKLRAFGGDTNTLKDSGKARREEK).

The protein belongs to the RxLR effector family.

It localises to the secreted. It is found in the host nucleus. The protein localises to the host cytoplasm. Functionally, secreted effector that completely suppresses the host cell death induced by cell death-inducing proteins. The protein is Secreted RxLR effector protein 144 of Plasmopara viticola (Downy mildew of grapevine).